The sequence spans 330 residues: Ferredoxin--NADP reductase (330 aa).

Residues T18, E37, Q45, Y50, V90, F124, D286, and T327 each contribute to the FAD site.

The protein belongs to the ferredoxin--NADP reductase type 2 family. As to quaternary structure, homodimer. It depends on FAD as a cofactor.

It carries out the reaction 2 reduced [2Fe-2S]-[ferredoxin] + NADP(+) + H(+) = 2 oxidized [2Fe-2S]-[ferredoxin] + NADPH. In Halalkalibacterium halodurans (strain ATCC BAA-125 / DSM 18197 / FERM 7344 / JCM 9153 / C-125) (Bacillus halodurans), this protein is Ferredoxin--NADP reductase.